The sequence spans 149 residues: NPC intracellular cholesterol transporter 2 (149 aa).

Residues 1–21 form the signal peptide; the sequence is MRLLVAAFLLLALGDLGPGGA. Cystine bridges form between Cys27/Cys140, Cys42/Cys47, and Cys93/Cys99. N-linked (GlcNAc...) asparagine glycosylation is present at Asn58. Lys116 is subject to N6-acetyllysine.

The protein belongs to the NPC2 family. As to quaternary structure, interacts with NPC1 (via the second lumenal domain) in a cholestrol-dependent manner. Interacts with NUS1/NgBR, the interaction stabilizes NCP2 and regulates cholesterol trafficking. Interacts with DHDDS. Interacts with NEDD4L (via C2 domain). Interacts with NPC1L1. As to expression, epididymis. High levels are found in the caput and corpus regions. Weaker levels in the distal cauda and in the efferent ducts.

It localises to the secreted. It is found in the endoplasmic reticulum. The protein resides in the lysosome. The catalysed reaction is cholesterol(in) = cholesterol(out). Functionally, intracellular cholesterol transporter which acts in concert with NPC1 and plays an important role in the egress of cholesterol from the lysosomal compartment. Unesterified cholesterol that has been released from LDLs in the lumen of the late endosomes/lysosomes is transferred by NPC2 to the cholesterol-binding pocket in the N-terminal domain of NPC1. May bind and mobilize cholesterol that is associated with membranes. NPC2 binds cholesterol with a 1:1 stoichiometry. Can bind a variety of sterols, including lathosterol, desmosterol and the plant sterols stigmasterol and beta-sitosterol. The secreted form of NCP2 regulates biliary cholesterol secretion via stimulation of ABCG5/ABCG8-mediated cholesterol transport. This Canis lupus familiaris (Dog) protein is NPC intracellular cholesterol transporter 2.